The sequence spans 544 residues: Thermosome subunit (544 aa).

It belongs to the TCP-1 chaperonin family. Forms an oligomeric complex of eight-membered rings.

Molecular chaperone; binds unfolded polypeptides in vitro, and has a weak ATPase activity. This Methanothermococcus thermolithotrophicus (Methanococcus thermolithotrophicus) protein is Thermosome subunit (ths).